The sequence spans 104 residues: Nucleoid-associated protein Amuc_1227 (104 aa).

The protein belongs to the YbaB/EbfC family. As to quaternary structure, homodimer.

It localises to the cytoplasm. The protein resides in the nucleoid. Binds to DNA and alters its conformation. May be involved in regulation of gene expression, nucleoid organization and DNA protection. The protein is Nucleoid-associated protein Amuc_1227 of Akkermansia muciniphila (strain ATCC BAA-835 / DSM 22959 / JCM 33894 / BCRC 81048 / CCUG 64013 / CIP 107961 / Muc).